Here is a 195-residue protein sequence, read N- to C-terminus: Imidazoleglycerol-phosphate dehydratase (195 aa).

This sequence belongs to the imidazoleglycerol-phosphate dehydratase family.

Its subcellular location is the cytoplasm. It catalyses the reaction D-erythro-1-(imidazol-4-yl)glycerol 3-phosphate = 3-(imidazol-4-yl)-2-oxopropyl phosphate + H2O. The protein operates within amino-acid biosynthesis; L-histidine biosynthesis; L-histidine from 5-phospho-alpha-D-ribose 1-diphosphate: step 6/9. The protein is Imidazoleglycerol-phosphate dehydratase of Heliobacterium modesticaldum (strain ATCC 51547 / Ice1).